The chain runs to 427 residues: Dihydroorotase (427 aa).

His-58 and His-60 together coordinate Zn(2+). Residues 60 to 62 and Asn-92 contribute to the substrate site; that span reads HYR. Zn(2+) contacts are provided by Asp-150, His-177, and His-230. Asn-276 contributes to the substrate binding site. Residue Asp-303 participates in Zn(2+) binding. Asp-303 is a catalytic residue. Substrate-binding positions include His-307 and 321–322; that span reads FG.

It belongs to the metallo-dependent hydrolases superfamily. DHOase family. Class I DHOase subfamily. Requires Zn(2+) as cofactor.

It catalyses the reaction (S)-dihydroorotate + H2O = N-carbamoyl-L-aspartate + H(+). It participates in pyrimidine metabolism; UMP biosynthesis via de novo pathway; (S)-dihydroorotate from bicarbonate: step 3/3. Catalyzes the reversible cyclization of carbamoyl aspartate to dihydroorotate. This Lactobacillus leichmannii protein is Dihydroorotase.